The following is a 137-amino-acid chain: Large ribosomal subunit protein uL22c (137 aa).

It belongs to the universal ribosomal protein uL22 family. As to quaternary structure, part of the 50S ribosomal subunit.

The protein localises to the plastid. It localises to the chloroplast. Its function is as follows. This protein binds specifically to 23S rRNA. The globular domain of the protein is located near the polypeptide exit tunnel on the outside of the subunit, while an extended beta-hairpin is found that lines the wall of the exit tunnel in the center of the 70S ribosome. The protein is Large ribosomal subunit protein uL22c (rpl22) of Oenothera argillicola (Appalachian evening primrose).